The chain runs to 87 residues: CRISPR-associated endoribonuclease Cas2 (87 aa).

Aspartate 8 serves as a coordination point for Mg(2+).

It belongs to the CRISPR-associated endoribonuclease Cas2 protein family. In terms of assembly, homodimer, forms a heterotetramer with a Cas1 homodimer. The cofactor is Mg(2+).

Functionally, CRISPR (clustered regularly interspaced short palindromic repeat), is an adaptive immune system that provides protection against mobile genetic elements (viruses, transposable elements and conjugative plasmids). CRISPR clusters contain sequences complementary to antecedent mobile elements and target invading nucleic acids. CRISPR clusters are transcribed and processed into CRISPR RNA (crRNA). Functions as a ssRNA-specific endoribonuclease. Involved in the integration of spacer DNA into the CRISPR cassette. This Methanosarcina acetivorans (strain ATCC 35395 / DSM 2834 / JCM 12185 / C2A) protein is CRISPR-associated endoribonuclease Cas2.